The following is a 168-amino-acid chain: uncharacterized protein (168 aa).

The interval 18-73 (RTTVKTKSHNPKTLYPNNKPRWESKLHAGPKGFQSSRTSEKPGRPDPDPEDDPPIP) is disordered. Positions 55–64 (TSEKPGRPDP) are enriched in basic and acidic residues. 2 consecutive transmembrane segments (helical) span residues 84–104 (IVVS…VLEV) and 113–133 (VPLW…ALGI).

The protein resides in the membrane. This is an uncharacterized protein from Arabidopsis thaliana (Mouse-ear cress).